The following is a 77-amino-acid chain: Large ribosomal subunit protein bL28 (77 aa).

Residues 1 to 20 (MSRVCQVTGKGPVTGNNISH) form a disordered region.

It belongs to the bacterial ribosomal protein bL28 family.

This chain is Large ribosomal subunit protein bL28, found in Pseudomonas fluorescens (strain Pf0-1).